An 85-amino-acid polypeptide reads, in one-letter code: Toxin To6 (85 aa).

Positions 1-20 (MSIFPIILALLLIGLDEGEA) are cleaved as a signal peptide. The LCN-type CS-alpha/beta domain maps to 21 to 83 (LDGYPLSKNN…EMYPGRLPCN (63 aa)). Intrachain disulfides connect Cys-32–Cys-82, Cys-36–Cys-59, Cys-42–Cys-64, and Cys-46–Cys-66.

As to expression, expressed by the venom gland.

Its subcellular location is the secreted. Its function is as follows. Beta toxins bind voltage-independently at site-4 of sodium channels (Nav) and shift the voltage of activation toward more negative potentials thereby affecting sodium channel activation and promoting spontaneous and repetitive firing. This is Toxin To6 from Tityus obscurus (Amazonian scorpion).